Here is a 620-residue protein sequence, read N- to C-terminus: Chaperone protein HscA homolog (620 aa).

The protein belongs to the heat shock protein 70 family.

Functionally, chaperone involved in the maturation of iron-sulfur cluster-containing proteins. Has a low intrinsic ATPase activity which is markedly stimulated by HscB. The sequence is that of Chaperone protein HscA homolog from Neisseria meningitidis serogroup A / serotype 4A (strain DSM 15465 / Z2491).